The sequence spans 86 residues: Small ribosomal subunit protein bS20 (86 aa).

The protein belongs to the bacterial ribosomal protein bS20 family.

Binds directly to 16S ribosomal RNA. The polypeptide is Small ribosomal subunit protein bS20 (Mycolicibacterium vanbaalenii (strain DSM 7251 / JCM 13017 / BCRC 16820 / KCTC 9966 / NRRL B-24157 / PYR-1) (Mycobacterium vanbaalenii)).